Consider the following 239-residue polypeptide: Uridylate kinase (239 aa).

13-16 is a binding site for ATP; it reads KLSG. A UMP-binding site is contributed by Gly-55. ATP-binding residues include Gly-56 and Arg-60. UMP-binding positions include Asp-75 and 136–143; that span reads TGNPFFTT. Residues Thr-163, Asn-164, Tyr-169, and Asp-172 each contribute to the ATP site.

This sequence belongs to the UMP kinase family. As to quaternary structure, homohexamer.

The protein resides in the cytoplasm. It catalyses the reaction UMP + ATP = UDP + ADP. It functions in the pathway pyrimidine metabolism; CTP biosynthesis via de novo pathway; UDP from UMP (UMPK route): step 1/1. With respect to regulation, inhibited by UTP. Functionally, catalyzes the reversible phosphorylation of UMP to UDP. The sequence is that of Uridylate kinase from Neisseria meningitidis serogroup C / serotype 2a (strain ATCC 700532 / DSM 15464 / FAM18).